A 340-amino-acid polypeptide reads, in one-letter code: GTPase Obg (340 aa).

Positions 1–161 (MKFVDMTNIT…QHLLLELLLI (161 aa)) constitute an Obg domain. In terms of domain architecture, OBG-type G spans 162–335 (ANVGIFGLPN…LCNSIMKFIM (174 aa)). GTP is bound by residues 168 to 175 (GLPNSGKS), 193 to 197 (FTTLV), 215 to 218 (DIPG), 285 to 288 (NKID), and 316 to 318 (SSI). The Mg(2+) site is built by Ser-175 and Thr-195.

It belongs to the TRAFAC class OBG-HflX-like GTPase superfamily. OBG GTPase family. In terms of assembly, monomer. The cofactor is Mg(2+).

It is found in the cytoplasm. An essential GTPase which binds GTP, GDP and possibly (p)ppGpp with moderate affinity, with high nucleotide exchange rates and a fairly low GTP hydrolysis rate. Plays a role in control of the cell cycle, stress response, ribosome biogenesis and in those bacteria that undergo differentiation, in morphogenesis control. The protein is GTPase Obg of Blochmanniella pennsylvanica (strain BPEN).